The primary structure comprises 350 residues: Glycerol-1-phosphate dehydrogenase [NAD(P)+] (350 aa).

NAD(+) contacts are provided by residues 94–98 and 116–119; these read GKPID and TVAS. Residue aspartate 121 participates in substrate binding. Serine 125 is an NAD(+) binding site. A substrate-binding site is contributed by aspartate 168. Aspartate 168 and histidine 248 together coordinate Zn(2+). Residue histidine 252 participates in substrate binding. Histidine 264 contributes to the Zn(2+) binding site.

It belongs to the glycerol-1-phosphate dehydrogenase family. Zn(2+) is required as a cofactor.

It localises to the cytoplasm. The enzyme catalyses sn-glycerol 1-phosphate + NAD(+) = dihydroxyacetone phosphate + NADH + H(+). The catalysed reaction is sn-glycerol 1-phosphate + NADP(+) = dihydroxyacetone phosphate + NADPH + H(+). It functions in the pathway membrane lipid metabolism; glycerophospholipid metabolism. Its function is as follows. Catalyzes the NAD(P)H-dependent reduction of dihydroxyacetonephosphate (DHAP or glycerone phosphate) to glycerol 1-phosphate (G1P). The G1P thus generated is used as the glycerophosphate backbone of phospholipids in the cellular membranes of Archaea. The protein is Glycerol-1-phosphate dehydrogenase [NAD(P)+] of Halorubrum lacusprofundi (strain ATCC 49239 / DSM 5036 / JCM 8891 / ACAM 34).